We begin with the raw amino-acid sequence, 156 residues long: 17.7 kDa class II heat shock protein (156 aa).

In terms of domain architecture, sHSP spans 39 to 156 (DAKAMAATPA…KPKTIQVQVA (118 aa)).

It belongs to the small heat shock protein (HSP20) family. May form oligomeric structures.

Its subcellular location is the cytoplasm. The chain is 17.7 kDa class II heat shock protein (HSP17.7) from Arabidopsis thaliana (Mouse-ear cress).